The primary structure comprises 225 residues: Ribosome maturation factor RimM (225 aa).

The region spanning 144 to 225 (ADEFYWVDLI…RIVVDWEADY (82 aa)) is the PRC barrel domain.

It belongs to the RimM family. In terms of assembly, binds ribosomal protein uS19.

The protein localises to the cytoplasm. Its function is as follows. An accessory protein needed during the final step in the assembly of 30S ribosomal subunit, possibly for assembly of the head region. Essential for efficient processing of 16S rRNA. May be needed both before and after RbfA during the maturation of 16S rRNA. It has affinity for free ribosomal 30S subunits but not for 70S ribosomes. This is Ribosome maturation factor RimM from Burkholderia orbicola (strain AU 1054).